Reading from the N-terminus, the 209-residue chain is Ribosomal RNA large subunit methyltransferase E (209 aa).

S-adenosyl-L-methionine-binding residues include glycine 63, tryptophan 65, aspartate 83, aspartate 99, and aspartate 124. Residue lysine 164 is the Proton acceptor of the active site.

It belongs to the class I-like SAM-binding methyltransferase superfamily. RNA methyltransferase RlmE family.

The protein localises to the cytoplasm. The catalysed reaction is uridine(2552) in 23S rRNA + S-adenosyl-L-methionine = 2'-O-methyluridine(2552) in 23S rRNA + S-adenosyl-L-homocysteine + H(+). Functionally, specifically methylates the uridine in position 2552 of 23S rRNA at the 2'-O position of the ribose in the fully assembled 50S ribosomal subunit. The sequence is that of Ribosomal RNA large subunit methyltransferase E from Vibrio parahaemolyticus serotype O3:K6 (strain RIMD 2210633).